The chain runs to 55 residues: Large ribosomal subunit protein bL33 (55 aa).

Belongs to the bacterial ribosomal protein bL33 family.

This Mycobacterium leprae (strain Br4923) protein is Large ribosomal subunit protein bL33.